Here is a 280-residue protein sequence, read N- to C-terminus: tRNA pseudouridine synthase A (280 aa).

Asp-55 (nucleophile) is an active-site residue. Tyr-110 is a substrate binding site.

This sequence belongs to the tRNA pseudouridine synthase TruA family.

The catalysed reaction is uridine(38/39/40) in tRNA = pseudouridine(38/39/40) in tRNA. Formation of pseudouridine at positions 38, 39 and 40 in the anticodon stem and loop of transfer RNAs. This chain is tRNA pseudouridine synthase A, found in Methanosphaerula palustris (strain ATCC BAA-1556 / DSM 19958 / E1-9c).